Here is a 306-residue protein sequence, read N- to C-terminus: MNDRTEAVKAYLLDLQDRICAALEVEDGGARFVEDAWTRPGGGGGRTRVIENGALIEKGGVNFSHVHGDSLPPSASAHRPELAGRSFEALGVSLVIHPHNPYVPTSHANVRFFIAEKDGEEPVWWFGGGFDLTPYYGAEEDCVHWHRVARDACAPFGAEVYPRYKEWCDRYFHIKHRNEPRGVGGLFFDDLNQWDFDTSFAFMRAVGDAYLQAYLPIVQRRKATPFGERERQFQLLRRGRYVEYNLVYDRGTLFGLQSGGRTESILMSLPPQVAWGYDKRPEPGSPEARLTEYFLQDRDWLAAAPA.

Ser-93 contributes to the substrate binding site. A divalent metal cation contacts are provided by His-97 and His-107. Catalysis depends on His-107, which acts as the Proton donor. 109-111 (NVR) contributes to the substrate binding site. Residues His-146 and His-176 each contribute to the a divalent metal cation site. Positions 241–276 (YVEYNLVYDRGTLFGLQSGGRTESILMSLPPQVAWG) are important for dimerization. 259-261 (GGR) lines the substrate pocket.

This sequence belongs to the aerobic coproporphyrinogen-III oxidase family. In terms of assembly, homodimer. A divalent metal cation is required as a cofactor.

It is found in the cytoplasm. The catalysed reaction is coproporphyrinogen III + O2 + 2 H(+) = protoporphyrinogen IX + 2 CO2 + 2 H2O. The protein operates within porphyrin-containing compound metabolism; protoporphyrin-IX biosynthesis; protoporphyrinogen-IX from coproporphyrinogen-III (O2 route): step 1/1. Involved in the heme biosynthesis. Catalyzes the aerobic oxidative decarboxylation of propionate groups of rings A and B of coproporphyrinogen-III to yield the vinyl groups in protoporphyrinogen-IX. This is Oxygen-dependent coproporphyrinogen-III oxidase from Stutzerimonas stutzeri (strain A1501) (Pseudomonas stutzeri).